A 763-amino-acid polypeptide reads, in one-letter code: Thiamine biosynthesis multifunctional protein ThiED (763 aa).

The thiamine-phosphate synthase stretch occupies residues 1–210; that stretch reads MTDFSLYLVT…ANPAAAATRL (210 aa). Residues 37 to 41 and Asn-69 contribute to the 4-amino-2-methyl-5-(diphosphooxymethyl)pyrimidine site; that span reads QLRDK. The Mg(2+) site is built by Asp-70 and Asp-88. Ser-107 contacts 4-amino-2-methyl-5-(diphosphooxymethyl)pyrimidine. A 2-[(2R,5Z)-2-carboxy-4-methylthiazol-5(2H)-ylidene]ethyl phosphate-binding site is contributed by 140-142; it reads TAT. Residue Lys-143 participates in 4-amino-2-methyl-5-(diphosphooxymethyl)pyrimidine binding. 2-[(2R,5Z)-2-carboxy-4-methylthiazol-5(2H)-ylidene]ethyl phosphate is bound by residues Gly-174 and 194-195; that span reads VS. Positions 245 to 500 are hydroxymethylpyrimidine/phosphomethylpyrimidine kinase; that stretch reads LSIAGTDPTG…GTGNGPVDHG (256 aa). Residue Gln-282 coordinates 4-amino-5-hydroxymethyl-2-methylpyrimidine. A thiaminase-2 region spans residues 550–763; sequence FTRALWEASG…RHGWTMVGSS (214 aa).

In the N-terminal section; belongs to the thiamine-phosphate synthase family. This sequence in the central section; belongs to the ThiD family. It in the C-terminal section; belongs to the thiaminase-2 family. Mg(2+) is required as a cofactor.

The enzyme catalyses 2-[(2R,5Z)-2-carboxy-4-methylthiazol-5(2H)-ylidene]ethyl phosphate + 4-amino-2-methyl-5-(diphosphooxymethyl)pyrimidine + 2 H(+) = thiamine phosphate + CO2 + diphosphate. It catalyses the reaction 2-(2-carboxy-4-methylthiazol-5-yl)ethyl phosphate + 4-amino-2-methyl-5-(diphosphooxymethyl)pyrimidine + 2 H(+) = thiamine phosphate + CO2 + diphosphate. It carries out the reaction 4-methyl-5-(2-phosphooxyethyl)-thiazole + 4-amino-2-methyl-5-(diphosphooxymethyl)pyrimidine + H(+) = thiamine phosphate + diphosphate. The catalysed reaction is 4-amino-5-hydroxymethyl-2-methylpyrimidine + ATP = 4-amino-2-methyl-5-(phosphooxymethyl)pyrimidine + ADP + H(+). The enzyme catalyses 4-amino-2-methyl-5-(phosphooxymethyl)pyrimidine + ATP = 4-amino-2-methyl-5-(diphosphooxymethyl)pyrimidine + ADP. It participates in cofactor biosynthesis; thiamine diphosphate biosynthesis; 4-amino-2-methyl-5-diphosphomethylpyrimidine from 5-amino-1-(5-phospho-D-ribosyl)imidazole: step 3/3. It functions in the pathway cofactor biosynthesis; thiamine diphosphate biosynthesis; thiamine phosphate from 4-amino-2-methyl-5-diphosphomethylpyrimidine and 4-methyl-5-(2-phosphoethyl)-thiazole: step 1/1. Functionally, condenses 4-methyl-5-(beta-hydroxyethyl)thiazole monophosphate (THZ-P) and 2-methyl-4-amino-5-hydroxymethyl pyrimidine pyrophosphate (HMP-PP) to form thiamine monophosphate (TMP). Catalyzes the phosphorylation of hydroxymethylpyrimidine phosphate (HMP-P) to HMP-PP, and of HMP to HMP-P. The chain is Thiamine biosynthesis multifunctional protein ThiED (theD) from Corynebacterium glutamicum (strain ATCC 13032 / DSM 20300 / JCM 1318 / BCRC 11384 / CCUG 27702 / LMG 3730 / NBRC 12168 / NCIMB 10025 / NRRL B-2784 / 534).